We begin with the raw amino-acid sequence, 215 residues long: Cytochrome b6 (215 aa).

A helical transmembrane segment spans residues 32-52; it reads IFYCLGGITLTCFLVQVATGF. Cys35 serves as a coordination point for heme c. The heme b site is built by His86 and His100. The next 3 helical transmembrane spans lie at 90 to 110, 116 to 136, and 186 to 206; these read ASMM…TGGF, LTWV…VTGY, and LHTF…FLMI. Positions 187 and 202 each coordinate heme b.

This sequence belongs to the cytochrome b family. PetB subfamily. As to quaternary structure, the 4 large subunits of the cytochrome b6-f complex are cytochrome b6, subunit IV (17 kDa polypeptide, PetD), cytochrome f and the Rieske protein, while the 4 small subunits are PetG, PetL, PetM and PetN. The complex functions as a dimer. Requires heme b as cofactor. The cofactor is heme c.

It is found in the plastid. Its subcellular location is the chloroplast thylakoid membrane. Component of the cytochrome b6-f complex, which mediates electron transfer between photosystem II (PSII) and photosystem I (PSI), cyclic electron flow around PSI, and state transitions. The sequence is that of Cytochrome b6 from Hordeum vulgare (Barley).